Reading from the N-terminus, the 486-residue chain is Cardiolipin synthase A (486 aa).

2 helical membrane passes run 3 to 23 and 38 to 58; these read TFYT…IAGV and MAWL…YLSV. PLD phosphodiesterase domains are found at residues 219 to 246 and 399 to 426; these read MDLR…VDPR and EGGL…DMRS. Catalysis depends on residues His224, Lys226, Asp231, His404, Lys406, and Asp411.

The protein belongs to the phospholipase D family. Cardiolipin synthase subfamily. ClsA sub-subfamily.

The protein resides in the cell inner membrane. It carries out the reaction 2 a 1,2-diacyl-sn-glycero-3-phospho-(1'-sn-glycerol) = a cardiolipin + glycerol. Catalyzes the reversible phosphatidyl group transfer from one phosphatidylglycerol molecule to another to form cardiolipin (CL) (diphosphatidylglycerol) and glycerol. The polypeptide is Cardiolipin synthase A (Salmonella choleraesuis (strain SC-B67)).